We begin with the raw amino-acid sequence, 2225 residues long: Multifunctional protein pyr1-3 (2225 aa).

An N-acetylmethionine modification is found at Met1. The segment at 40–390 (MVGYNESISD…NVCGEQQHKS (351 aa)) is GATase (Glutamine amidotransferase). Residues Ser51, Gly245, and Gly247 each contribute to the L-glutamine site. A Glutamine amidotransferase type-1 domain is found at 196–388 (KVIVLDCGIK…VDNVCGEQQH (193 aa)). Catalysis depends on Cys275, which acts as the Nucleophile; for GATase activity. Residues Gln279, Asn317, Gly319, and Phe320 each contribute to the L-glutamine site. Residues His361 and Glu363 each act as for GATase activity in the active site. The segment at 391-405 (PMNKSKIIDCPKGIN) is linker. The CPSase A stretch occupies residues 406–948 (KVLILGSGGL…TNDVNINEKS (543 aa)). Residues 406–1461 (KVLILGSGGL…MKGPMPIENV (1056 aa)) form a CPSase (Carbamoyl-phosphate synthase) region. ATP contacts are provided by Arg526, Arg566, Gly572, Gly573, Lys603, Glu610, Gly636, Ile637, His638, Gln679, and Glu693. ATP-grasp domains follow at residues 530–722 (AEKL…KVAL) and 1069–1260 (SRLL…KIII). Gln679, Glu693, and Asn695 together coordinate Mg(2+). Residues Gln679, Glu693, and Asn695 each contribute to the Mn(2+) site. The interval 949–1461 (YITLGSGSYR…MKGPMPIENV (513 aa)) is CPSase B. ATP-binding residues include Arg1105, Lys1144, Ile1146, Glu1151, Gly1176, Val1177, His1178, Ser1179, Gln1219, and Glu1231. The Mg(2+) site is built by Gln1219, Glu1231, and Asn1233. Positions 1219, 1231, and 1233 each coordinate Mn(2+). An MGS-like domain is found at 1324–1470 (FKAPEKNVLL…VDWRTSNKII (147 aa)). The DHOase (dihydroorotase) stretch occupies residues 1463–1797 (WRTSNKIIRL…VRGKVVKVVL (335 aa)). His1479 and His1481 together coordinate Zn(2+). (S)-dihydroorotate is bound by residues Arg1483 and Asn1513. Zn(2+)-binding residues include Lys1564, His1599, Cys1622, His1623, and Glu1646. Lys1564 carries the post-translational modification N6-carboxylysine. (S)-dihydroorotate is bound at residue Arg1670. Residue Asp1695 participates in Zn(2+) binding. Asp1695 functions as the For DHOase activity in the catalytic mechanism. His1699 and Pro1711 together coordinate (S)-dihydroorotate. A linker region spans residues 1798–1916 (RGQIAFIDGK…DTLQTAFNIS (119 aa)). Residues 1917–2225 (DNSLAGKHIF…LLALVFGAGV (309 aa)) form an ATCase (Aspartate transcarbamylase) region. 2 residues coordinate carbamoyl phosphate: Arg1974 and Thr1975. Lys2002 lines the L-aspartate pocket. Residues Arg2023, His2051, and Gln2054 each contribute to the carbamoyl phosphate site. L-aspartate is bound by residues Arg2084 and Arg2145. 2 residues coordinate carbamoyl phosphate: Leu2184 and Pro2185.

The protein in the N-terminal section; belongs to the CarA family. This sequence in the 2nd section; belongs to the CarB family. In the 3rd section; belongs to the metallo-dependent hydrolases superfamily. DHOase family. CAD subfamily. It in the C-terminal section; belongs to the aspartate/ornithine carbamoyltransferase superfamily. ATCase family. In terms of assembly, homohexamer. The cofactor is Mg(2+). Mn(2+) is required as a cofactor. It depends on Zn(2+) as a cofactor.

The protein localises to the cytoplasm. It carries out the reaction hydrogencarbonate + L-glutamine + 2 ATP + H2O = carbamoyl phosphate + L-glutamate + 2 ADP + phosphate + 2 H(+). The enzyme catalyses L-glutamine + H2O = L-glutamate + NH4(+). The catalysed reaction is hydrogencarbonate + NH4(+) + 2 ATP = carbamoyl phosphate + 2 ADP + phosphate + 2 H(+). It catalyses the reaction carbamoyl phosphate + L-aspartate = N-carbamoyl-L-aspartate + phosphate + H(+). It carries out the reaction (S)-dihydroorotate + H2O = N-carbamoyl-L-aspartate + H(+). The protein operates within pyrimidine metabolism; UMP biosynthesis via de novo pathway; (S)-dihydroorotate from bicarbonate: step 1/3. Its pathway is pyrimidine metabolism; UMP biosynthesis via de novo pathway; (S)-dihydroorotate from bicarbonate: step 2/3. It participates in pyrimidine metabolism; UMP biosynthesis via de novo pathway; (S)-dihydroorotate from bicarbonate: step 3/3. Its activity is regulated as follows. Allosterically regulated and controlled by phosphorylation. 5-phosphoribose 1-diphosphate is an activator while UMP is an inhibitor of the CPSase reaction. Functionally, multifunctional protein that encodes the first 3 enzymatic activities of the de novo pyrimidine pathway: carbamoylphosphate synthetase (CPSase; EC 6.3.5.5), aspartate transcarbamylase (ATCase; EC 2.1.3.2) and dihydroorotase (DHOase; EC 3.5.2.3). The CPSase-function is accomplished in 2 steps, by a glutamine-dependent amidotransferase activity (GATase) that binds and cleaves glutamine to produce ammonia, followed by an ammonium-dependent carbamoyl phosphate synthetase, which reacts with the ammonia, hydrogencarbonate and ATP to form carbamoyl phosphate. The endogenously produced carbamoyl phosphate is sequestered and channeled to the ATCase active site. ATCase then catalyzes the formation of carbamoyl-L-aspartate from L-aspartate and carbamoyl phosphate. In the last step, DHOase catalyzes the cyclization of carbamoyl aspartate to dihydroorotate. This Dictyostelium discoideum (Social amoeba) protein is Multifunctional protein pyr1-3 (pyr1-3).